A 279-amino-acid polypeptide reads, in one-letter code: NADPH-dependent 7-cyano-7-deazaguanine reductase (279 aa).

86–88 (IES) contacts substrate. 88-89 (SK) contributes to the NADPH binding site. The active-site Thioimide intermediate is cysteine 187. The active-site Proton donor is aspartate 194. 226 to 227 (HE) is a binding site for substrate. 255–256 (RG) contributes to the NADPH binding site.

This sequence belongs to the GTP cyclohydrolase I family. QueF type 2 subfamily. As to quaternary structure, homodimer.

It is found in the cytoplasm. The catalysed reaction is 7-aminomethyl-7-carbaguanine + 2 NADP(+) = 7-cyano-7-deazaguanine + 2 NADPH + 3 H(+). Its pathway is tRNA modification; tRNA-queuosine biosynthesis. Its function is as follows. Catalyzes the NADPH-dependent reduction of 7-cyano-7-deazaguanine (preQ0) to 7-aminomethyl-7-deazaguanine (preQ1). This chain is NADPH-dependent 7-cyano-7-deazaguanine reductase, found in Histophilus somni (strain 129Pt) (Haemophilus somnus).